The primary structure comprises 362 residues: Methylthioribose-1-phosphate isomerase (362 aa).

D252 (proton donor) is an active-site residue.

Belongs to the eIF-2B alpha/beta/delta subunits family. MtnA subfamily.

It localises to the cytoplasm. Its subcellular location is the nucleus. The enzyme catalyses 5-(methylsulfanyl)-alpha-D-ribose 1-phosphate = 5-(methylsulfanyl)-D-ribulose 1-phosphate. It functions in the pathway amino-acid biosynthesis; L-methionine biosynthesis via salvage pathway; L-methionine from S-methyl-5-thio-alpha-D-ribose 1-phosphate: step 1/6. Functionally, catalyzes the interconversion of methylthioribose-1-phosphate (MTR-1-P) into methylthioribulose-1-phosphate (MTRu-1-P). The chain is Methylthioribose-1-phosphate isomerase from Drosophila virilis (Fruit fly).